A 246-amino-acid polypeptide reads, in one-letter code: Pyrroloquinoline-quinone synthase (246 aa).

This sequence belongs to the PqqC family.

The catalysed reaction is 6-(2-amino-2-carboxyethyl)-7,8-dioxo-1,2,3,4,7,8-hexahydroquinoline-2,4-dicarboxylate + 3 O2 = pyrroloquinoline quinone + 2 H2O2 + 2 H2O + H(+). The protein operates within cofactor biosynthesis; pyrroloquinoline quinone biosynthesis. Its function is as follows. Ring cyclization and eight-electron oxidation of 3a-(2-amino-2-carboxyethyl)-4,5-dioxo-4,5,6,7,8,9-hexahydroquinoline-7,9-dicarboxylic-acid to PQQ. The sequence is that of Pyrroloquinoline-quinone synthase from Acidiphilium cryptum (strain JF-5).